A 171-amino-acid polypeptide reads, in one-letter code: MVPLFGLFCIFSQLYSLCSAYVDITSGYQVFFNLPTNMTNNQICWLFQASYYDIYSDKSGRTLRTGRFEPGDQQSLIYRDTLVELEAITDSYEYSNLDLSTYNGPEPYNSETDYCTDIMDLVMRVYDEEGHYVHPVANNSTNACAHPTPPTLNNLLISNYSDGRNYKESSI.

Positions 1–20 (MVPLFGLFCIFSQLYSLCSA) are cleaved as a signal peptide. N-linked (GlcNAc...) asparagine glycans are attached at residues Asn-37, Asn-139, and Asn-159.

The protein localises to the cytoplasm. It is found in the secreted. The sequence is that of Secreted protein CSS3 from Saccharomyces cerevisiae (strain ATCC 204508 / S288c) (Baker's yeast).